Consider the following 328-residue polypeptide: Malate dehydrogenase (328 aa).

G11–G17 contributes to the NAD(+) binding site. The substrate site is built by R92 and R98. Residues N105, Q112, and T129–N131 each bind NAD(+). Substrate-binding residues include N131 and R162. The Proton acceptor role is filled by H187.

This sequence belongs to the LDH/MDH superfamily. MDH type 2 family.

It catalyses the reaction (S)-malate + NAD(+) = oxaloacetate + NADH + H(+). Its function is as follows. Catalyzes the reversible oxidation of malate to oxaloacetate. This Paenarthrobacter aurescens (strain TC1) protein is Malate dehydrogenase.